The following is a 362-amino-acid chain: Phospho-N-acetylmuramoyl-pentapeptide-transferase (362 aa).

Transmembrane regions (helical) follow at residues 18-38 (VFGYITLRTVLAALTALAISL), 73-93 (TMGGALILIAIGITILLWGDL), 97-117 (YVWVTLLVTLGFGAVGWVDDW), 134-154 (YFWTSAIALGASIFLGLSATT), 160-180 (LIVPFFKAVAYPLGVYGFIAL), 200-220 (GLAIMPTVMVAGALAIFAYVA), 237-257 (AGELAVFCGAICGAGLGFLWF), 264-284 (VFMGDVGALALGAALGTIAVV), 289-309 (IVLFIMGGLFVAETLSVMVQV), and 339-359 (QVVVRFWIITLMLVLFGLSTL).

The protein belongs to the glycosyltransferase 4 family. MraY subfamily. Mg(2+) serves as cofactor.

It is found in the cell inner membrane. The catalysed reaction is UDP-N-acetyl-alpha-D-muramoyl-L-alanyl-gamma-D-glutamyl-meso-2,6-diaminopimeloyl-D-alanyl-D-alanine + di-trans,octa-cis-undecaprenyl phosphate = di-trans,octa-cis-undecaprenyl diphospho-N-acetyl-alpha-D-muramoyl-L-alanyl-D-glutamyl-meso-2,6-diaminopimeloyl-D-alanyl-D-alanine + UMP. It functions in the pathway cell wall biogenesis; peptidoglycan biosynthesis. Catalyzes the initial step of the lipid cycle reactions in the biosynthesis of the cell wall peptidoglycan: transfers peptidoglycan precursor phospho-MurNAc-pentapeptide from UDP-MurNAc-pentapeptide onto the lipid carrier undecaprenyl phosphate, yielding undecaprenyl-pyrophosphoryl-MurNAc-pentapeptide, known as lipid I. This is Phospho-N-acetylmuramoyl-pentapeptide-transferase from Azoarcus sp. (strain BH72).